Consider the following 190-residue polypeptide: Xanthine phosphoribosyltransferase (190 aa).

Positions 20 and 27 each coordinate xanthine. Position 127 to 131 (127 to 131 (AYGNA)) interacts with 5-phospho-alpha-D-ribose 1-diphosphate. Residue lysine 155 participates in xanthine binding.

The protein belongs to the purine/pyrimidine phosphoribosyltransferase family. Xpt subfamily. As to quaternary structure, homodimer.

The protein localises to the cytoplasm. It catalyses the reaction XMP + diphosphate = xanthine + 5-phospho-alpha-D-ribose 1-diphosphate. Its pathway is purine metabolism; XMP biosynthesis via salvage pathway; XMP from xanthine: step 1/1. Functionally, converts the preformed base xanthine, a product of nucleic acid breakdown, to xanthosine 5'-monophosphate (XMP), so it can be reused for RNA or DNA synthesis. This Bacteroides thetaiotaomicron (strain ATCC 29148 / DSM 2079 / JCM 5827 / CCUG 10774 / NCTC 10582 / VPI-5482 / E50) protein is Xanthine phosphoribosyltransferase.